Here is a 99-residue protein sequence, read N- to C-terminus: U11-barytoxin-Tl1a (99 aa).

Residues 1-21 form the signal peptide; sequence MKTLVLVAVLGLASLYLLSYA. Residues 22 to 50 constitute a propeptide that is removed on maturation; that stretch reads SEVQQISRDEEDFRALMASFGGIFDTEER. Cystine bridges form between Cys-57-Cys-71, Cys-64-Cys-76, and Cys-70-Cys-90.

Belongs to the neurotoxin 10 (Hwtx-1) family. 25 (ICK4) subfamily. Expressed by the venom gland.

It localises to the secreted. Functionally, ion channel inhibitor. The chain is U11-barytoxin-Tl1a from Trittame loki (Brush-footed trapdoor spider).